Here is a 1767-residue protein sequence, read N- to C-terminus: Endo-alpha-N-acetylgalactosaminidase (1767 aa).

The first 39 residues, 1–39 (MNKGLFEKRCKYSIRKFSLGVASVMIGATFFGTSPVLAD), serve as a signal peptide directing secretion. 2 stretches are compositionally biased toward basic and acidic residues: residues 63–75 (NDGH…KVGE) and 84–111 (DGPK…DKPA). 2 disordered regions span residues 63–137 (NDGH…QGTV) and 301–324 (VKTD…GPEV). Positions 112-124 (AAKPETPKTVTPE) are enriched in low complexity. Basic and acidic residues-rich tracts occupy residues 127–137 (TVEKKEQQGTV) and 304–324 (DNQE…GPEV). 5 residues coordinate Ca(2+): aspartate 577, asparagine 579, aspartate 581, lysine 583, and aspartate 588. A catalytic region spans residues 602-893 (GWKKVKDITA…DVMTKYFQHF (292 aa)). Aspartate 658 is a binding site for substrate. Residue aspartate 764 is the Nucleophile of the active site. Glutamate 796 acts as the Proton donor/acceptor in catalysis. Positions 1233, 1235, 1281, 1284, and 1411 each coordinate Ca(2+). An LPXTG sorting signal motif is present at residues 1735–1739 (LPATG). The residue at position 1738 (threonine 1738) is a Pentaglycyl murein peptidoglycan amidated threonine. A propeptide spans 1739-1767 (GESQFDTALFLASVSLALSALFVVKTKKD) (removed by sortase).

It belongs to the glycosyl hydrolase 101 family. A subfamily.

It is found in the secreted. It localises to the cell wall. It carries out the reaction a 3-O-[beta-D-galactosyl-(1-&gt;3)-N-acetyl-alpha-D-galactosaminyl]-L-threonyl-[protein] + H2O = beta-D-galactosyl-(1-&gt;3)-N-acetyl-D-galactosamine + L-threonyl-[protein]. The catalysed reaction is a 3-O-[beta-D-galactosyl-(1-&gt;3)-N-acetyl-alpha-D-galactosaminyl]-L-seryl-[protein] + H2O = beta-D-galactosyl-(1-&gt;3)-N-acetyl-D-galactosamine + L-seryl-[protein]. Its function is as follows. Involved in the breakdown of mucin-type O-linked glycans. Specifically removes the T-antigen disaccharide (Gal-beta-1,3-GalNAc-alpha) from extracellular host glycoproteins. Representative of a broadly important class of virulence factors. This chain is Endo-alpha-N-acetylgalactosaminidase, found in Streptococcus pneumoniae (strain ATCC BAA-255 / R6).